The sequence spans 231 residues: Lipoprotein-releasing system ATP-binding protein LolD (231 aa).

Residues 6 to 230 (LSCKNVSKKY…DGELELVINS (225 aa)) form the ABC transporter domain. An ATP-binding site is contributed by 42–49 (GLSGSGKT).

This sequence belongs to the ABC transporter superfamily. Lipoprotein translocase (TC 3.A.1.125) family. As to quaternary structure, the complex is composed of two ATP-binding proteins (LolD) and two transmembrane proteins (LolC and LolE).

Its subcellular location is the cell inner membrane. Part of the ABC transporter complex LolCDE involved in the translocation of mature outer membrane-directed lipoproteins, from the inner membrane to the periplasmic chaperone, LolA. Responsible for the formation of the LolA-lipoprotein complex in an ATP-dependent manner. The protein is Lipoprotein-releasing system ATP-binding protein LolD of Francisella tularensis subsp. holarctica (strain OSU18).